Reading from the N-terminus, the 497-residue chain is Ankyrin repeat domain-containing protein 53 (497 aa).

Residues M1–K10 are compositionally biased toward basic residues. The disordered stretch occupies residues M1–Q65. A compositionally biased stretch (low complexity) spans S12–S27. Basic and acidic residues predominate over residues D28 to P39. ANK repeat units lie at residues K110–L140, K144–S177, and N181–A210. Positions W239–E264 form a coiled coil.

In terms of assembly, interacts with PSRC1; recruited by PSRC1 to the spindle during mitosis. Phosphorylated during mitosis.

Its subcellular location is the cytoplasm. The protein localises to the cytoskeleton. It is found in the spindle. The protein resides in the spindle pole. Its function is as follows. Required for normal progression through mitosis. Involved in chromosome alignment and cytokinesis via regulation of microtubules polymerization. The polypeptide is Ankyrin repeat domain-containing protein 53 (Ankrd53) (Mus musculus (Mouse)).